Here is a 434-residue protein sequence, read N- to C-terminus: Glycerol-3-phosphate acyltransferase 3 (434 aa).

Residues 14–34 form a helical membrane-spanning segment; it reads WLTLVLGFILLPSVFGVSLGI. Residues S68 and S77 each carry the phosphoserine modification. The next 2 membrane-spanning stretches (helical) occupy residues 137–157 and 161–181; these read ISLR…CVLL and VTLA…VGQL. Positions 229-234 match the HXXXXD motif motif; sequence HTSPID.

Belongs to the 1-acyl-sn-glycerol-3-phosphate acyltransferase family. Widely expressed. Expressed in liver, kidney, testis, brain, heart, skeletal muscle, thyroid, prostate, thymus and placenta. Also expressed lung and adipose tissue.

It is found in the endoplasmic reticulum membrane. The catalysed reaction is sn-glycerol 3-phosphate + an acyl-CoA = a 1-acyl-sn-glycero-3-phosphate + CoA. It carries out the reaction a 1-acyl-sn-glycero-3-phosphate + an acyl-CoA = a 1,2-diacyl-sn-glycero-3-phosphate + CoA. It catalyses the reaction dodecanoyl-CoA + sn-glycerol 3-phosphate = 1-dodecanoyl-sn-glycerol 3-phosphate + CoA. The enzyme catalyses sn-glycerol 3-phosphate + hexadecanoyl-CoA = 1-hexadecanoyl-sn-glycero-3-phosphate + CoA. The catalysed reaction is sn-glycerol 3-phosphate + (9Z)-octadecenoyl-CoA = 1-(9Z-octadecenoyl)-sn-glycero-3-phosphate + CoA. It carries out the reaction (9Z,12Z)-octadecadienoyl-CoA + sn-glycerol 3-phosphate = 1-(9Z,12Z)-octadecadienoyl-sn-glycero-3-phosphate + CoA. It catalyses the reaction 1-tetradecanoyl-sn-glycerol 3-phosphate + (9Z)-octadecenoyl-CoA = 1-tetradecanoyl-2-(9Z)-octadecenoyl-sn-glycero-3-phosphate + CoA. The enzyme catalyses 1-hexadecanoyl-sn-glycero-3-phosphate + (9Z)-octadecenoyl-CoA = 1-hexadecanoyl-2-(9Z-octadecenoyl)-sn-glycero-3-phosphate + CoA. The catalysed reaction is 1-(9Z-octadecenoyl)-sn-glycero-3-phosphate + (9Z)-octadecenoyl-CoA = 1,2-di-(9Z-octadecenoyl)-sn-glycero-3-phosphate + CoA. It carries out the reaction 1-(6Z,9Z,12Z-octadecatrienoyl)-sn-glycero-3-phosphate + (9Z)-octadecenoyl-CoA = (6Z,9Z,12Z)-octadecatrienoyl-2-(9Z)-octadecenoyl-sn-glycero-3-phosphate + CoA. It catalyses the reaction 1-(9Z,12Z,15Z)-octadecatrienoyl-sn-glycero-3-phosphate + (9Z)-octadecenoyl-CoA = 1-(9Z,12Z,15Z)-octadecatrienoyl-2-(9Z)-octadecenoyl-sn-glycero-3-phosphate + CoA. The enzyme catalyses 1-(9Z-octadecenoyl)-sn-glycero-3-phosphate + tetradecanoyl-CoA = 1-(9Z)-octadecenoyl-2-tetradecanoyl-sn-glycero-3-phosphate + CoA. The catalysed reaction is 1-(9Z-octadecenoyl)-sn-glycero-3-phosphate + hexadecanoyl-CoA = 1-(9Z)-octadecenoyl-2-hexadecanoyl-sn-glycero-3-phosphate + CoA. It carries out the reaction 1-(9Z-octadecenoyl)-sn-glycero-3-phosphate + octadecanoyl-CoA = 1-(9Z-octadecenoyl)-2-octadecanoyl-sn-glycero-3-phosphate + CoA. It catalyses the reaction 1-(9Z-octadecenoyl)-sn-glycero-3-phosphate + (9Z,12Z)-octadecadienoyl-CoA = 1-(9Z)-octadecenoyl-2-(9Z,12Z)-octadecadienoyl-sn-glycero-3-phosphate + CoA. The enzyme catalyses 1-(5Z,8Z,11Z,14Z-eicosatetraenoyl)-sn-glycero-3-phosphate + (9Z)-octadecenoyl-CoA = 1-(5Z,8Z,11Z,14Z)-eicosatetraenoyl-2-(9Z)-octadecenoyl-sn-glycero-3-phosphate + CoA. The protein operates within glycerolipid metabolism; triacylglycerol biosynthesis. It participates in phospholipid metabolism; CDP-diacylglycerol biosynthesis; CDP-diacylglycerol from sn-glycerol 3-phosphate: step 1/3. Inhibited by N-ethylmaleimide (NEM). Functionally, converts glycerol-3-phosphate to 1-acyl-sn-glycerol-3-phosphate (lysophosphatidic acid or LPA) by incorporating an acyl moiety at the sn-1 position of the glycerol backbone. Also converts LPA into 1,2-diacyl-sn-glycerol-3-phosphate (phosphatidic acid or PA) by incorporating an acyl moiety at the sn-2 position of the glycerol backbone. Protects cells against lipotoxicity. The polypeptide is Glycerol-3-phosphate acyltransferase 3 (Homo sapiens (Human)).